The primary structure comprises 204 residues: Pantothenate transporter PanT (204 aa).

6 helical membrane-spanning segments follow: residues Ile18–Val38, Gly39–Arg59, Phe63–Ile83, Leu86–Gly106, Leu123–Leu143, and Ile176–Ile196.

In terms of assembly, in E.coli forms a stable energy-coupling factor (ECF) transporter complex probably composed of a membrane-embedded substrate-binding protein (S component), two ATP-binding proteins (A components) and a transmembrane protein (T component).

The protein localises to the cell membrane. Its function is as follows. Probable pantothenate-binding protein that interacts with the energy-coupling factor (ECF) ABC-transporter complex. Unlike classic ABC transporters this ECF transporter provides the energy necessary to transport a number of different substrates. The substrates themselves are bound by transmembrane, not extracytoplasmic soluble proteins and transport it into cells. Upon coexpression with its energy-coupling factor (ECF) ABC-transporter complex EcfA1A2T in E.coli allows pantothenate uptake; uptake requires both PanT and EcfA1A2T. The protein is Pantothenate transporter PanT (panT) of Leuconostoc mesenteroides subsp. mesenteroides (strain ATCC 8293 / DSM 20343 / BCRC 11652 / CCM 1803 / JCM 6124 / NCDO 523 / NBRC 100496 / NCIMB 8023 / NCTC 12954 / NRRL B-1118 / 37Y).